A 690-amino-acid polypeptide reads, in one-letter code: Protein SPT2 homolog (690 aa).

Residues 1–579 (MDFHNILVMA…PGHRPVFRPQ (579 aa)) form an important for interaction with DNA region. Residues 40 to 82 (ESAAVQAFLRRKEEEKRKKELEEKRKKERLLAKRIELKHDRKA) adopt a coiled-coil conformation. Disordered stretches follow at residues 105–167 (PKKR…APAP) and 186–619 (EIKV…QEEI). Basic and acidic residues predominate over residues 186–228 (EIKVVKKIEERPRTAEELREREYLERKNKRVETQKKKSEKEVK). Positions 229–243 (SAGISSSSKKATSLK) are enriched in low complexity. Composition is skewed to basic and acidic residues over residues 244-259 (ECAD…DKHA) and 271-285 (TDKK…EKHS). Polar residues predominate over residues 369–380 (HETNSSAKRPSS). Over residues 383–396 (GKGGSGHPAGGSSA) the composition is skewed to gly residues. The span at 397–442 (GPGRSSSNSGTGPGRPGSVSSPGPGRQGSSSAAGPGRPSSSSSLGP) shows a compositional bias: low complexity. 3 stretches are compositionally biased toward gly residues: residues 443–457 (GRLG…GRPG), 465–477 (GRPG…GPGR), and 489–521 (LGSG…GPGR). Positions 545–565 (VSETISSKNLVTRPSNGQING) are enriched in polar residues. The important for interaction with histones stretch occupies residues 580 to 690 (GIGRPPVGYK…KRQSKKLRTR (111 aa)). A compositionally biased stretch (acidic residues) spans 593 to 617 (DDDDDDDEYDSEMDDFIEDEGEPQE). The stretch at 650–690 (REQQKEEARSLRLGVQEDLEELRREEEELKRKRQSKKLRTR) forms a coiled coil.

It belongs to the SPT2 family. Interacts with POLR1A. Interacts with histones. Interacts with a heterotetrameric complex formed by histone H3 and H4, especially when the histone tetramer is not bound to DNA.

The protein localises to the nucleus. It localises to the nucleolus. Histone chaperone that stabilizes pre-existing histone tetramers and regulates replication-independent histone exchange on chromatin. Required for normal chromatin refolding in the coding region of transcribed genes, and for the suppression of spurious transcription. Binds DNA and histones and promotes nucleosome assembly (in vitro). Modulates RNA polymerase 1-mediated transcription. Required for optimal growth in the presence of the DNA damaging agents actinomycin D or mitomycin C (in vitro). Facilitates formation of tetrameric histone complexes containing histone H3 and H4. Modulates RNA polymerase 1-mediated transcription. Binds DNA, with a preference for branched DNA species, such as Y-form DNA and Holliday junction DNA. This chain is Protein SPT2 homolog (SPTY2D1), found in Gallus gallus (Chicken).